Consider the following 393-residue polypeptide: S-adenosylmethionine synthase (393 aa).

H17 contributes to the ATP binding site. D19 lines the Mg(2+) pocket. Position 45 (E45) interacts with K(+). E58 and Q106 together coordinate L-methionine. Residues 106–116 form a flexible loop region; that stretch reads QSAHIAQGVDA. Residues 171 to 173, 237 to 238, D246, 252 to 253, A269, and K273 each bind ATP; these read DAK, KF, and RK. Position 246 (D246) interacts with L-methionine. Position 277 (K277) interacts with L-methionine.

This sequence belongs to the AdoMet synthase family. As to quaternary structure, homotetramer; dimer of dimers. Requires Mg(2+) as cofactor. It depends on K(+) as a cofactor.

The protein localises to the cytoplasm. It carries out the reaction L-methionine + ATP + H2O = S-adenosyl-L-methionine + phosphate + diphosphate. Its pathway is amino-acid biosynthesis; S-adenosyl-L-methionine biosynthesis; S-adenosyl-L-methionine from L-methionine: step 1/1. Its function is as follows. Catalyzes the formation of S-adenosylmethionine (AdoMet) from methionine and ATP. The overall synthetic reaction is composed of two sequential steps, AdoMet formation and the subsequent tripolyphosphate hydrolysis which occurs prior to release of AdoMet from the enzyme. The polypeptide is S-adenosylmethionine synthase (Jannaschia sp. (strain CCS1)).